A 603-amino-acid polypeptide reads, in one-letter code: Probable potassium transport system protein Kup (603 aa).

The next 12 helical transmembrane spans lie at 15–35 (GLVF…IFLL), 43–63 (VIGV…VEYA), 94–114 (AAFI…DGVI), 136–156 (IGQG…FSVQ), 163–183 (ITWV…FSGI), 201–221 (AISF…EVIL), 244–264 (AWRL…AFII), 284–304 (IYIP…QAMI), 336–356 (IYIG…IFEF), 367–387 (GLAV…IFYL), 391–411 (MFRS…LLSN), and 415–435 (IPHG…LIII).

Belongs to the HAK/KUP transporter (TC 2.A.72) family.

The protein resides in the cell membrane. The catalysed reaction is K(+)(in) + H(+)(in) = K(+)(out) + H(+)(out). Transport of potassium into the cell. Likely operates as a K(+):H(+) symporter. The chain is Probable potassium transport system protein Kup from Methanosarcina acetivorans (strain ATCC 35395 / DSM 2834 / JCM 12185 / C2A).